An 89-amino-acid chain; its full sequence is MEVDKSLIAFLEMLDTAMAQRMLADLANDEKRTPQLYNAINKLLDRHKFQIGKLQPDVHILGGLAGALEEYKEKVGDNGLTDDDIYTLQ.

Gp18 and gp19 associate with DNA and prohead.

In terms of biological role, during the growth of this phage, DNA is synthesized as concatemers. During DNA packaging mature monomers are cut from the concatemers. This Enterobacteria phage T3 (Bacteriophage T3) protein is DNA maturase A (18).